The sequence spans 254 residues: Isoprenyl transferase (254 aa).

Asp23 is a catalytic residue. Asp23 lines the Mg(2+) pocket. Residues 24-27, Trp28, Arg36, His40, and 68-70 each bind substrate; these read GNGR and STE. Asn71 (proton acceptor) is an active-site residue. Substrate contacts are provided by residues Trp72, Arg74, Arg191, and 197-199; that span reads RIS. Glu210 contacts Mg(2+).

The protein belongs to the UPP synthase family. Homodimer. The cofactor is Mg(2+).

Catalyzes the condensation of isopentenyl diphosphate (IPP) with allylic pyrophosphates generating different type of terpenoids. This Porphyromonas gingivalis (strain ATCC BAA-308 / W83) protein is Isoprenyl transferase.